Reading from the N-terminus, the 412-residue chain is Acyl-[acyl-carrier-protein] hydrolase FATB2, chloroplastic (412 aa).

Low complexity-rich tracts occupy residues 1-13 (TAAS…VPSA) and 56-66 (GSSVGLKSGGL). The transit peptide at 1-46 (TAASSAFFPVPSADTSSRPGKLGNGPSSFSPLKPKSIPNGGLQVKA) directs the protein to the chloroplast. Residues 1–78 (TAASSAFFPV…HDDAPSAPPP (78 aa)) form a disordered region. Residues asparagine 311, histidine 313, and cysteine 348 contribute to the active site.

The protein belongs to the acyl-ACP thioesterase family.

The protein localises to the plastid. Its subcellular location is the chloroplast. The enzyme catalyses tetradecanoyl-[ACP] + H2O = tetradecanoate + holo-[ACP] + H(+). The catalysed reaction is hexadecanoyl-[ACP] + H2O = hexadecanoate + holo-[ACP] + H(+). Its function is as follows. Plays an essential role in chain termination during de novo fatty acid synthesis. Possesses thioesterase activity for medium chain acyl-ACPs. Substrate preference is 14:0 &gt; 16:0 &gt; 16:1. The protein is Acyl-[acyl-carrier-protein] hydrolase FATB2, chloroplastic of Cuphea viscosissima (Blue waxweed).